Consider the following 205-residue polypeptide: ATP-dependent Clp protease proteolytic subunit (205 aa).

Residue serine 98 is the Nucleophile of the active site. Residue histidine 123 is part of the active site.

The protein belongs to the peptidase S14 family. In terms of assembly, fourteen ClpP subunits assemble into 2 heptameric rings which stack back to back to give a disk-like structure with a central cavity, resembling the structure of eukaryotic proteasomes.

The protein localises to the cytoplasm. It catalyses the reaction Hydrolysis of proteins to small peptides in the presence of ATP and magnesium. alpha-casein is the usual test substrate. In the absence of ATP, only oligopeptides shorter than five residues are hydrolyzed (such as succinyl-Leu-Tyr-|-NHMec, and Leu-Tyr-Leu-|-Tyr-Trp, in which cleavage of the -Tyr-|-Leu- and -Tyr-|-Trp bonds also occurs).. Cleaves peptides in various proteins in a process that requires ATP hydrolysis. Has a chymotrypsin-like activity. Plays a major role in the degradation of misfolded proteins. This chain is ATP-dependent Clp protease proteolytic subunit, found in Desulfosudis oleivorans (strain DSM 6200 / JCM 39069 / Hxd3) (Desulfococcus oleovorans).